Here is a 406-residue protein sequence, read N- to C-terminus: Ribose-phosphate pyrophosphokinase 3, mitochondrial (406 aa).

The disordered stretch occupies residues 1–32 (MAATPHRHLLQPCKNPAISSSETLKPSSSFSL). Residues 1-87 (MAATPHRHLL…RRFQMSSNQE (87 aa)) constitute a mitochondrion transit peptide. Residues 18–32 (ISSSETLKPSSSFSL) are compositionally biased toward low complexity. 2 residues coordinate Mg(2+): D226 and H228. A binding of phosphoribosylpyrophosphate region spans residues 309–324 (GRHVVIVDDLVQSGGT).

Belongs to the ribose-phosphate pyrophosphokinase family.

It localises to the mitochondrion. It carries out the reaction D-ribose 5-phosphate + ATP = 5-phospho-alpha-D-ribose 1-diphosphate + AMP + H(+). This Spinacia oleracea (Spinach) protein is Ribose-phosphate pyrophosphokinase 3, mitochondrial (PRS3).